A 504-amino-acid polypeptide reads, in one-letter code: CaM kinase-like vesicle-associated protein (504 aa).

A Protein kinase domain is found at 24 to 286; that stretch reads YDLGQVVKTE…AEEAISHEWI (263 aa). A disordered region spans residues 378-504; sequence KSDDMASADR…AQESQRVETS (127 aa). Residue Ser384 is modified to Phosphoserine. Residues 390–431 show a composition bias toward polar residues; the sequence is TPATDGSATPATDGSVTPATDGSITPATDGSVTPATDRSATP. 2 positions are modified to phosphothreonine: Thr438 and Thr462. Positions 445 to 470 are enriched in low complexity; sequence TVPAAQSSAAPAAKAAATPEPAVAQP.

Belongs to the protein kinase superfamily. CAMK Ser/Thr protein kinase family. As to quaternary structure, interacts with calmodulin, in the presence of calcium. It depends on Ca(2+) as a cofactor. Expressed in brain and weakly in eye. Not detected in liver, kidney, spleen, thymus, bladder, aorta, lung, intestine, esophagus, stomach, skeletal muscle, heart, diaphragm, uterus, tail skin, submaxillary gland, prostate, ear, epididymis, placenta, pancreas, ovary, testis, adrenal gland, parathyroid gland, thyroid gland, pineal gland, pituitary and sciatic nerve. In adult hippocampus, predominantly expressed in caudate nucleus, cortex, hypothalamus, olfactory bulb, and midbrain and faintly in pons, brainstem and spinal cord.

It is found in the cell membrane. It localises to the cytoplasmic vesicle membrane. Functionally, has no detectable kinase activity in vitro. This is CaM kinase-like vesicle-associated protein (Camkv) from Rattus norvegicus (Rat).